The primary structure comprises 151 residues: Thymosin beta (151 aa).

Tandem repeats lie at residues 24–29 (LKKVET), 62–67 (LHSTPV), 100–105 (LKKTET), and 134–139 (LHHVET). Residues 24 to 139 (LKKVETTEKN…DKSALHHVET (116 aa)) form a 4 X 6 AA repeat of L-[KH]-[KSH]-[VT]-[EP]-[TV] region.

Belongs to the thymosin beta family. As to quaternary structure, interacts (via repeats 1, 2 and 4) with G-actin in a 1:3 ratio. Interacts (via repeats 2 and 3) with F-actin. At the comma stage, enriched in the developing nerve ring (at protein level). Ubiquitously expressed in larvae and adults with enrichment in the spermatheca, the intestinal tract and the posterior bulb of the pharynx (at protein level). Expressed in oocytes and in the gonad (at protein level).

It localises to the cytoplasm. The protein localises to the cell cortex. It is found in the cell junction. The protein resides in the cytoskeleton. Its function is as follows. Plays an important role in the organization of the cytoskeleton by regulating actin polymerization in two ways. Firstly, by binding to and sequestering actin monomers (G actin) inhibits actin polymerization. Secondly, by binding directly filamentous actin (F actin) promotes actin polymerization. Regulates the formation of cortical actin in oocytes conferring them enough rigidity to sustain the contractions during ovulation. This is Thymosin beta from Caenorhabditis elegans.